A 203-amino-acid chain; its full sequence is Peptidyl-tRNA hydrolase (203 aa).

Residue Tyr-18 coordinates tRNA. The Proton acceptor role is filled by His-23. TRNA-binding residues include Tyr-69, Asn-71, and Asn-117.

Belongs to the PTH family. As to quaternary structure, monomer.

Its subcellular location is the cytoplasm. It carries out the reaction an N-acyl-L-alpha-aminoacyl-tRNA + H2O = an N-acyl-L-amino acid + a tRNA + H(+). Functionally, hydrolyzes ribosome-free peptidyl-tRNAs (with 1 or more amino acids incorporated), which drop off the ribosome during protein synthesis, or as a result of ribosome stalling. In terms of biological role, catalyzes the release of premature peptidyl moieties from peptidyl-tRNA molecules trapped in stalled 50S ribosomal subunits, and thus maintains levels of free tRNAs and 50S ribosomes. This chain is Peptidyl-tRNA hydrolase, found in Parasynechococcus marenigrum (strain WH8102).